Consider the following 726-residue polypeptide: Transmembrane channel-like protein 8 (726 aa).

Residues 1-114 (MLLPRSVSSE…GIRSYFTFLR (114 aa)) are Cytoplasmic-facing. Serine 6 carries the post-translational modification Phosphoserine. Residues 115–135 (FLLLLNLLSLLLTASFVLLPL) form a helical membrane-spanning segment. Residues 136 to 200 (VWLRPPDPGP…VGPESSSVYS (65 aa)) lie on the Lumenal side of the membrane. Asparagine 148 is a glycosylation site (N-linked (GlcNAc...) asparagine). The chain crosses the membrane as a helical span at residues 201–221 (IRLAYLLSPLACLLLCFCGTL). The Cytoplasmic portion of the chain corresponds to 222–299 (RRMVKGLPQK…AQTACRLLSY (78 aa)). Residues 300-320 (LRVNVLNGLLVVGAISAIFWA) form a helical membrane-spanning segment. Residues 321 to 338 (TKYSQDNKEESLFLLLQY) lie on the Lumenal side of the membrane. The helical transmembrane segment at 339–359 (LPPGVIALVNFLGPLLFTFLV) threads the bilayer. The Cytoplasmic portion of the chain corresponds to 360-426 (QLENYPPNTE…QCWENSVGEE (67 aa)). The segment at 362–530 (ENYPPNTEVN…SSRPFRASSS (169 aa)) is TMC domain. Residues 427 to 447 (LYKLSIFNFLLTVAFAFLVTL) traverse the membrane as a helical segment. Residues 448–488 (PRRLLVDRFSGRFWAWLEREEFLVPKNVLDIVAGQTVTWMG) are Lumenal-facing. Residues 489-509 (LFYCPLLPLLNSVFLFLTFYI) form a helical membrane-spanning segment. The Cytoplasmic segment spans residues 510-531 (KKYTLLKNSRASSRPFRASSST). The chain crosses the membrane as a helical span at residues 532 to 552 (FFFQLVLLLGLLLAAVPLGYV). The Lumenal portion of the chain corresponds to 553 to 594 (VSSIHSSWDCGLFTNYSAPWQVVPELVALGLPPIGQRALHYL). N-linked (GlcNAc...) asparagine glycosylation occurs at asparagine 567. Residues 595–615 (GSHAFSFPLLIMLSLVLTVCV) traverse the membrane as a helical segment. At 616–726 (SQTQANARAI…RFRFPSGAEL (111 aa)) the chain is on the cytoplasmic side. The tract at residues 651–726 (PEPGPSDSPG…RFRFPSGAEL (76 aa)) is disordered. Positions 652–662 (EPGPSDSPGPK) are enriched in pro residues. A phosphoserine mark is found at serine 658 and serine 673.

It belongs to the TMC family. In terms of assembly, interacts with TMC6. Interacts and forms a complex with TMC6 and CIB1; the interaction stabilizes each component of the complex. Interacts and forms a complex with TMC6 and SLC30A1/ZNT1; the interaction regulates zinc transport into the ER. Interacts with TRADD; the interaction competes with TRADD/RIPK1/TRAF2/cIAPs complex I formation and facilites complex II formation. As to quaternary structure, (Microbial infection) Interacts with human papillomavirus 16/HPV16 protein E5; the interaction alleviates TMC8-mediated transcription factors inhibition. In terms of tissue distribution, expressed in placenta, prostate and testis.

The protein localises to the endoplasmic reticulum membrane. It is found in the golgi apparatus membrane. Its subcellular location is the nucleus membrane. Its function is as follows. Acts as a regulatory protein involved in the regulation of numerous cellular processes. Together with its homolog TMC6/EVER1, forms a complex with calcium-binding protein CIB1 in lymphocytes and keratynocytes where TMC6 and TMC8 stabilize CIB1 levels and reciprocally. Together with TMC6, also forms a complex with and activates zinc transporter ZNT1 at the ER membrane of keratynocytes, thereby facilitating zinc uptake into the ER. Also inhibits receptor-mediated calcium release from ER stores and calcium activated and volume regulated chloride channels. Down-regulates the activity of transcription factors induced by zinc and cytokines. Also sequesters TRADD which impairs the recruitment of TRAF2 and RIPK1 in the pro-survival complex I and promotes proapoptotic complex II formation, and may therefore be involved in TNF-induced cell death/survival decisions. The polypeptide is Transmembrane channel-like protein 8 (Homo sapiens (Human)).